A 349-amino-acid polypeptide reads, in one-letter code: Anthranilate phosphoribosyltransferase (349 aa).

5-phospho-alpha-D-ribose 1-diphosphate is bound by residues glycine 82, glycine 85–aspartate 86, asparagine 92–threonine 95, lysine 110–glycine 118, and serine 122. Glycine 82 is an anthranilate binding site. Serine 94 provides a ligand contact to Mg(2+). Anthranilate is bound at residue asparagine 113. Position 168 (arginine 168) interacts with anthranilate. Mg(2+) contacts are provided by aspartate 227 and glutamate 228.

This sequence belongs to the anthranilate phosphoribosyltransferase family. Homodimer. Mg(2+) is required as a cofactor.

It catalyses the reaction N-(5-phospho-beta-D-ribosyl)anthranilate + diphosphate = 5-phospho-alpha-D-ribose 1-diphosphate + anthranilate. Its pathway is amino-acid biosynthesis; L-tryptophan biosynthesis; L-tryptophan from chorismate: step 2/5. Its function is as follows. Catalyzes the transfer of the phosphoribosyl group of 5-phosphorylribose-1-pyrophosphate (PRPP) to anthranilate to yield N-(5'-phosphoribosyl)-anthranilate (PRA). The chain is Anthranilate phosphoribosyltransferase from Pseudomonas fluorescens (strain SBW25).